The chain runs to 310 residues: Zinc finger protein 42 homolog (310 aa).

The span at 1 to 15 shows a compositional bias: basic residues; that stretch reads MSQQLKKRAKTRHQK. Residues 1–35 form a disordered region; the sequence is MSQQLKKRAKTRHQKGLGGRAPSGAKPRQGKSSQD. 4 C2H2-type zinc fingers span residues 188-212, 217-239, 245-269, and 275-299; these read IACP…LLIH, HVCA…FLVH, FRCT…VRIH, and FVCP…ILTH. Residues lysine 231 and lysine 233 each participate in a glycyl lysine isopeptide (Lys-Gly) (interchain with G-Cter in ubiquitin) cross-link.

It belongs to the krueppel C2H2-type zinc-finger protein family. Post-translationally, polyubiquitinated by RNF12, leading to proteasomal degradation. Expressed in kidney, epidermal keratinocytes, prostate epithelial cells, bronchial and small airway lung epithelial cells (at protein level). Expressed in malignant kidney and several carcinoma cell lines (at protein level). Expressed in embryonic stem cells, kidney, epidermal keratinocytes, prostate epithelial cells, bronchial and small airway lung epithelial cells. Expressed in embryonal carcinomas, seminomas, malignant kidney and several carcinoma cell lines.

The protein resides in the nucleus. Its function is as follows. Involved in the reprogramming of X-chromosome inactivation during the acquisition of pluripotency. Required for efficient elongation of TSIX, a non-coding RNA antisense to XIST. Binds DXPas34 enhancer within the TSIX promoter. Involved in ES cell self-renewal. This Homo sapiens (Human) protein is Zinc finger protein 42 homolog (ZFP42).